Consider the following 149-residue polypeptide: Putative pre-16S rRNA nuclease (149 aa).

It belongs to the YqgF nuclease family.

It is found in the cytoplasm. Functionally, could be a nuclease involved in processing of the 5'-end of pre-16S rRNA. This chain is Putative pre-16S rRNA nuclease, found in Pseudoalteromonas translucida (strain TAC 125).